The sequence spans 246 residues: 1-(5-phosphoribosyl)-5-[(5-phosphoribosylamino)methylideneamino] imidazole-4-carboxamide isomerase (246 aa).

Asp-10 serves as the catalytic Proton acceptor. The Proton donor role is filled by Asp-135.

Belongs to the HisA/HisF family.

It is found in the cytoplasm. It catalyses the reaction 1-(5-phospho-beta-D-ribosyl)-5-[(5-phospho-beta-D-ribosylamino)methylideneamino]imidazole-4-carboxamide = 5-[(5-phospho-1-deoxy-D-ribulos-1-ylimino)methylamino]-1-(5-phospho-beta-D-ribosyl)imidazole-4-carboxamide. It functions in the pathway amino-acid biosynthesis; L-histidine biosynthesis; L-histidine from 5-phospho-alpha-D-ribose 1-diphosphate: step 4/9. This Methanosarcina mazei (strain ATCC BAA-159 / DSM 3647 / Goe1 / Go1 / JCM 11833 / OCM 88) (Methanosarcina frisia) protein is 1-(5-phosphoribosyl)-5-[(5-phosphoribosylamino)methylideneamino] imidazole-4-carboxamide isomerase.